We begin with the raw amino-acid sequence, 207 residues long: Large ribosomal subunit protein uL3 (207 aa).

This sequence belongs to the universal ribosomal protein uL3 family. Part of the 50S ribosomal subunit. Forms a cluster with proteins L14 and L19.

In terms of biological role, one of the primary rRNA binding proteins, it binds directly near the 3'-end of the 23S rRNA, where it nucleates assembly of the 50S subunit. The chain is Large ribosomal subunit protein uL3 from Desulforapulum autotrophicum (strain ATCC 43914 / DSM 3382 / VKM B-1955 / HRM2) (Desulfobacterium autotrophicum).